Reading from the N-terminus, the 360-residue chain is MAEVDLESDQIRLKCIRKEGFFTVPPEHRLGRCRSVKEFEKLNRIGEGTYGIVYRARDTQTDEIVALKKVRMDKEKDGIPISSLREITLLLRLRHPNIVELKEVVVGNHLESIFLVMGYCEQDLASLLENMPTPFSEAQVKCIMLQVLRGLQYLHRNFIIHRDLKVSNLLMTDKGCVKTADFGLARAYGVPVKPMTPKVVTLWYRAPELLLGTTTQTTSIDMWAVGCILAELLAHKPLLPGTSEIHQIDLIVQLLGTPSENIWPGFSKLPLAGQYSLRKQPYNNLKHKFPWLSEAGLRLLNFLFMYDPKKRATSGDCLESSYFKEKPLPCEPELMPTFPHHRNKRAAPAAAEGQSKRCRP.

The region spanning 39-323 (FEKLNRIGEG…SGDCLESSYF (285 aa)) is the Protein kinase domain. Residues 45-53 (IGEGTYGIV) and Lys68 contribute to the ATP site. Residue Asp163 is the Proton acceptor of the active site. Thr196 carries the phosphothreonine modification. The interval 334-360 (LMPTFPHHRNKRAAPAAAEGQSKRCRP) is disordered.

Belongs to the protein kinase superfamily. CMGC Ser/Thr protein kinase family. CDC2/CDKX subfamily. In terms of assembly, heterodimer with CCNQ, the interaction is required for kinase activity. Interacts with ETS2. Interacts with PRK2.

The protein resides in the cytoplasm. Its subcellular location is the cytoskeleton. It localises to the cilium basal body. The enzyme catalyses L-seryl-[protein] + ATP = O-phospho-L-seryl-[protein] + ADP + H(+). It carries out the reaction L-threonyl-[protein] + ATP = O-phospho-L-threonyl-[protein] + ADP + H(+). Its function is as follows. Cyclin-dependent kinase that phosphorylates the transcription factor ETS2 (in vitro) and positively controls its proteasomal degradation (in cells). Involved in the regulation of actin cytoskeleton organization through the phosphorylation of actin dynamics regulators such as PKN2. Is a negative regulator of ciliogenesis through phosphorylation of PKN2 and promotion of RhoA signaling. The sequence is that of Cyclin-dependent kinase 10 (Cdk10) from Mus musculus (Mouse).